Consider the following 496-residue polypeptide: Glycylpeptide N-tetradecanoyltransferase 1 (496 aa).

Residues 1–82 (MADESETAVK…STQDQPVKMT (82 aa)) are disordered. 2 positions are modified to phosphoserine: S31 and S47. The segment covering 55-66 (KKKKKKQKKKKE) has biased composition (basic residues). S83 is subject to Phosphoserine. Tetradecanoyl-CoA is bound by residues Q118, F119, W120, F247, L248, C249, V250, S256, R258, V259, and A260.

It belongs to the NMT family. As to expression, ubiquitous.

Its subcellular location is the cytoplasm. It localises to the cytosol. The protein resides in the membrane. The catalysed reaction is N-terminal glycyl-[protein] + tetradecanoyl-CoA = N-tetradecanoylglycyl-[protein] + CoA + H(+). It catalyses the reaction N-terminal glycyl-L-lysyl-[protein] + tetradecanoyl-CoA = N-terminal glycyl-(N(6)-tetradecanoyl)-L-lysyl-[protein] + CoA + H(+). Adds a myristoyl group to the N-terminal glycine residue of certain cellular and viral proteins. Also able to mediate N-terminal lysine myristoylation of proteins: catalyzes myristoylation of ARF6 on both 'Gly-2' and 'Lys-3'. Lysine myristoylation is required to maintain ARF6 on membranes during the GTPase cycle. Required for normal embryogenesis. This Mus musculus (Mouse) protein is Glycylpeptide N-tetradecanoyltransferase 1.